The chain runs to 236 residues: L-aspartate dehydrogenase (236 aa).

Residues 10–11 (AI), aspartate 31, 58–59 (AS), tyrosine 66, 80–81 (LS), alanine 111, and asparagine 162 contribute to the NAD(+) site. Residue histidine 189 is part of the active site. 212–215 (NPKT) contacts NAD(+).

Belongs to the L-aspartate dehydrogenase family. Homodimer.

The enzyme catalyses L-aspartate + NADP(+) + H2O = oxaloacetate + NH4(+) + NADPH + H(+). The catalysed reaction is L-aspartate + NAD(+) + H2O = oxaloacetate + NH4(+) + NADH + H(+). Its pathway is cofactor biosynthesis; NAD(+) biosynthesis; iminoaspartate from L-aspartate (dehydrogenase route): step 1/1. Its function is as follows. Specifically catalyzes the NAD or NADP-dependent dehydrogenation of L-aspartate to iminoaspartate. This is L-aspartate dehydrogenase from Archaeoglobus fulgidus (strain ATCC 49558 / DSM 4304 / JCM 9628 / NBRC 100126 / VC-16).